The sequence spans 548 residues: Membrane protein insertase YidC (548 aa).

Residues 6-26 (NLLIIALLFVSFMIWQAWEQD) traverse the membrane as a helical segment. A disordered region spans residues 28–52 (NPQPQQQTTQTTTTAAGSAADQGVP). A compositionally biased stretch (low complexity) spans 29–41 (PQPQQQTTQTTTT). A run of 4 helical transmembrane segments spans residues 345 to 365 (KFIH…TFIV), 420 to 440 (LGGC…YYML), 458 to 478 (LSAQ…MFFI), and 499 to 519 (PVIF…YYIV).

Belongs to the OXA1/ALB3/YidC family. Type 1 subfamily. Interacts with the Sec translocase complex via SecD. Specifically interacts with transmembrane segments of nascent integral membrane proteins during membrane integration.

Its subcellular location is the cell inner membrane. In terms of biological role, required for the insertion and/or proper folding and/or complex formation of integral membrane proteins into the membrane. Involved in integration of membrane proteins that insert both dependently and independently of the Sec translocase complex, as well as at least some lipoproteins. Aids folding of multispanning membrane proteins. The sequence is that of Membrane protein insertase YidC from Klebsiella pneumoniae (strain 342).